Here is a 180-residue protein sequence, read N- to C-terminus: O-acetyl-ADP-ribose deacetylase (180 aa).

Residues 1–175 (MKPQIEVVVG…LYQRLLIQRG (175 aa)) enclose the Macro domain. Residues 11–12 (DI), Asn-25, 33–35 (GVD), and 122–126 (STGVY) each bind substrate. Asp-35 acts as the Proton acceptor in catalysis.

This sequence belongs to the MacroD-type family. YmdB subfamily. In terms of assembly, homodimer. Interacts with RNase III.

The enzyme catalyses 3''-O-acetyl-ADP-D-ribose + H2O = ADP-D-ribose + acetate + H(+). It carries out the reaction 2''-O-acetyl-ADP-D-ribose + H2O = ADP-D-ribose + acetate + H(+). Functionally, deacetylates O-acetyl-ADP ribose to yield ADP-ribose and free acetate. Down-regulates ribonuclease 3 (RNase III) activity. Acts by interacting directly with the region of the ribonuclease that is required for dimerization/activation. This is O-acetyl-ADP-ribose deacetylase from Enterobacter sp. (strain 638).